The following is a 337-amino-acid chain: Hsp90 co-chaperone Cdc37-like 1 (337 aa).

Pro residues predominate over residues 1–11 (MEQPWPPPGPW). The disordered stretch occupies residues 1-43 (MEQPWPPPGPWSLPRAEGEAEEESDLDLSPGSPRCPQLPGGGT). The segment at 2–171 (EQPWPPPGPW…HEQKIRHFGM (170 aa)) is self-association. A phosphoserine mark is found at serine 32 and serine 88. A coiled-coil region spans residues 84-122 (HNSESLDQEHAKAQTAISELRQREEEWRQKEEALVQRER). The tract at residues 147–277 (KETEDEDKSK…SRVRLYSQSP (131 aa)) is self-association and interaction with Hsp90. Residues 267–337 (KSRVRLYSQS…DDEPKMMDTV (71 aa)) are interaction with Hsp70. The interval 278–337 (NFQPVTVQNHVPHSGVGSIGLLESLPQNPDYLQYSINTALCSLNSVVHKEDDEPKMMDTV) is required for interaction with STIP1.

The protein belongs to the CDC37 family. Self-associates. Forms complexes with Hsp70 and Hsp90. Interacts with CDC37, FKBP4, PPID and STIP1.

The protein resides in the cytoplasm. In terms of biological role, co-chaperone that binds to numerous proteins and promotes their interaction with Hsp70 and Hsp90. The polypeptide is Hsp90 co-chaperone Cdc37-like 1 (CDC37L1) (Bos taurus (Bovine)).